We begin with the raw amino-acid sequence, 98 residues long: Hainantoxin-XVII (98 aa).

An N-terminal signal peptide occupies residues 1 to 40 (MTTVGVSLFRRSPEKITMKIATFLGLSFLLIASYVLICEA). Residues 41–64 (QHPGFQELLILEENMRDPENSKER) constitute a propeptide that is removed on maturation. Intrachain disulfides connect Cys66–Cys81, Cys73–Cys85, and Cys80–Cys95.

It belongs to the hainantoxin family. 17 subfamily. In terms of tissue distribution, expressed by the venom gland.

The protein localises to the secreted. Putative ion channel inhibitor. The chain is Hainantoxin-XVII from Cyriopagopus hainanus (Chinese bird spider).